The primary structure comprises 259 residues: Pimeloyl-[acyl-carrier protein] methyl ester esterase (259 aa).

Positions 15–242 constitute an AB hydrolase-1 domain; sequence HLVLLHGWGL…AAHAPFISHP (228 aa). Substrate contacts are provided by residues Trp22, 82–83, and 143–147; these read SL and FLALQ. The Nucleophile role is filled by Ser82. Residues Asp207 and His235 contribute to the active site. His235 contacts substrate.

The protein belongs to the AB hydrolase superfamily. Carboxylesterase BioH family. Monomer.

The protein resides in the cytoplasm. The catalysed reaction is 6-carboxyhexanoyl-[ACP] methyl ester + H2O = 6-carboxyhexanoyl-[ACP] + methanol + H(+). Its pathway is cofactor biosynthesis; biotin biosynthesis. In terms of biological role, the physiological role of BioH is to remove the methyl group introduced by BioC when the pimeloyl moiety is complete. It allows to synthesize pimeloyl-ACP via the fatty acid synthetic pathway through the hydrolysis of the ester bonds of pimeloyl-ACP esters. The sequence is that of Pimeloyl-[acyl-carrier protein] methyl ester esterase from Cronobacter sakazakii (strain ATCC BAA-894) (Enterobacter sakazakii).